Reading from the N-terminus, the 207-residue chain is Adenylyl-sulfate kinase (207 aa).

Residue 39-46 coordinates ATP; sequence GLSGAGKS. Catalysis depends on serine 113, which acts as the Phosphoserine intermediate.

Belongs to the APS kinase family.

The catalysed reaction is adenosine 5'-phosphosulfate + ATP = 3'-phosphoadenylyl sulfate + ADP + H(+). It functions in the pathway sulfur metabolism; hydrogen sulfide biosynthesis; sulfite from sulfate: step 2/3. Catalyzes the synthesis of activated sulfate. The polypeptide is Adenylyl-sulfate kinase (Vibrio vulnificus (strain CMCP6)).